Consider the following 102-residue polypeptide: Aspartyl/glutamyl-tRNA(Asn/Gln) amidotransferase subunit C (102 aa).

This sequence belongs to the GatC family. As to quaternary structure, heterotrimer of A, B and C subunits.

The enzyme catalyses L-glutamyl-tRNA(Gln) + L-glutamine + ATP + H2O = L-glutaminyl-tRNA(Gln) + L-glutamate + ADP + phosphate + H(+). The catalysed reaction is L-aspartyl-tRNA(Asn) + L-glutamine + ATP + H2O = L-asparaginyl-tRNA(Asn) + L-glutamate + ADP + phosphate + 2 H(+). In terms of biological role, allows the formation of correctly charged Asn-tRNA(Asn) or Gln-tRNA(Gln) through the transamidation of misacylated Asp-tRNA(Asn) or Glu-tRNA(Gln) in organisms which lack either or both of asparaginyl-tRNA or glutaminyl-tRNA synthetases. The reaction takes place in the presence of glutamine and ATP through an activated phospho-Asp-tRNA(Asn) or phospho-Glu-tRNA(Gln). The sequence is that of Aspartyl/glutamyl-tRNA(Asn/Gln) amidotransferase subunit C from Bordetella avium (strain 197N).